The primary structure comprises 353 residues: UDP-N-acetylglucosamine--N-acetylmuramyl-(pentapeptide) pyrophosphoryl-undecaprenol N-acetylglucosamine transferase (353 aa).

UDP-N-acetyl-alpha-D-glucosamine contacts are provided by residues 10–12 (TGG), asparagine 124, serine 183, and glutamine 283.

It belongs to the glycosyltransferase 28 family. MurG subfamily.

The protein resides in the cell inner membrane. It carries out the reaction di-trans,octa-cis-undecaprenyl diphospho-N-acetyl-alpha-D-muramoyl-L-alanyl-D-glutamyl-meso-2,6-diaminopimeloyl-D-alanyl-D-alanine + UDP-N-acetyl-alpha-D-glucosamine = di-trans,octa-cis-undecaprenyl diphospho-[N-acetyl-alpha-D-glucosaminyl-(1-&gt;4)]-N-acetyl-alpha-D-muramoyl-L-alanyl-D-glutamyl-meso-2,6-diaminopimeloyl-D-alanyl-D-alanine + UDP + H(+). Its pathway is cell wall biogenesis; peptidoglycan biosynthesis. Cell wall formation. Catalyzes the transfer of a GlcNAc subunit on undecaprenyl-pyrophosphoryl-MurNAc-pentapeptide (lipid intermediate I) to form undecaprenyl-pyrophosphoryl-MurNAc-(pentapeptide)GlcNAc (lipid intermediate II). The sequence is that of UDP-N-acetylglucosamine--N-acetylmuramyl-(pentapeptide) pyrophosphoryl-undecaprenol N-acetylglucosamine transferase from Helicobacter pylori (strain J99 / ATCC 700824) (Campylobacter pylori J99).